An 84-amino-acid polypeptide reads, in one-letter code: UPF0512 protein O (84 aa).

Belongs to the UPF0512 family.

The protein is UPF0512 protein O of Dictyostelium discoideum (Social amoeba).